A 202-amino-acid polypeptide reads, in one-letter code: Chromophore lyase CpcT/CpeT 2 (202 aa).

It belongs to the CpcT/CpeT biliprotein lyase family.

Functionally, covalently attaches a chromophore to Cys residue(s) of phycobiliproteins. The sequence is that of Chromophore lyase CpcT/CpeT 2 from Gloeobacter violaceus (strain ATCC 29082 / PCC 7421).